A 297-amino-acid polypeptide reads, in one-letter code: ATP synthase gamma chain (297 aa).

Belongs to the ATPase gamma chain family. As to quaternary structure, F-type ATPases have 2 components, CF(1) - the catalytic core - and CF(0) - the membrane proton channel. CF(1) has five subunits: alpha(3), beta(3), gamma(1), delta(1), epsilon(1). CF(0) has three main subunits: a, b and c.

It is found in the cell membrane. In terms of biological role, produces ATP from ADP in the presence of a proton gradient across the membrane. The gamma chain is believed to be important in regulating ATPase activity and the flow of protons through the CF(0) complex. The sequence is that of ATP synthase gamma chain from Micrococcus luteus (strain ATCC 4698 / DSM 20030 / JCM 1464 / CCM 169 / CCUG 5858 / IAM 1056 / NBRC 3333 / NCIMB 9278 / NCTC 2665 / VKM Ac-2230) (Micrococcus lysodeikticus).